Reading from the N-terminus, the 244-residue chain is tRNA pseudouridine synthase A (244 aa).

D52 (nucleophile) is an active-site residue. Y110 lines the substrate pocket.

It belongs to the tRNA pseudouridine synthase TruA family. Homodimer.

The catalysed reaction is uridine(38/39/40) in tRNA = pseudouridine(38/39/40) in tRNA. Formation of pseudouridine at positions 38, 39 and 40 in the anticodon stem and loop of transfer RNAs. The sequence is that of tRNA pseudouridine synthase A from Clostridium botulinum (strain Alaska E43 / Type E3).